The primary structure comprises 425 residues: Glucose-6-phosphate 1-dehydrogenase (425 aa).

NADP(+)-binding residues include R44 and K135. 4 residues coordinate substrate: H165, K169, E201, and D220. Catalysis depends on H225, which acts as the Proton acceptor. K311 is a binding site for substrate.

The protein belongs to the glucose-6-phosphate dehydrogenase family.

It carries out the reaction D-glucose 6-phosphate + NADP(+) = 6-phospho-D-glucono-1,5-lactone + NADPH + H(+). It functions in the pathway carbohydrate degradation; pentose phosphate pathway; D-ribulose 5-phosphate from D-glucose 6-phosphate (oxidative stage): step 1/3. Its function is as follows. Catalyzes the oxidation of glucose 6-phosphate to 6-phosphogluconolactone. The polypeptide is Glucose-6-phosphate 1-dehydrogenase (Helicobacter pylori (strain ATCC 700392 / 26695) (Campylobacter pylori)).